The following is a 319-amino-acid chain: Protease HtpX homolog (319 aa).

2 helical membrane passes run 6–26 (TAML…VIGG) and 28–48 (GGMM…YWNS). H130 is a binding site for Zn(2+). E131 is an active-site residue. H134 lines the Zn(2+) pocket. A run of 2 helical transmembrane segments spans residues 145-165 (MTAT…FFGG) and 172-192 (PLGF…AALV). E201 lines the Zn(2+) pocket. The interval 280 to 319 (EMSTGSTAPVRPDNAVRKSRSVPRTGWGRGGSEPPKGPWS) is disordered.

Belongs to the peptidase M48B family. Requires Zn(2+) as cofactor.

It is found in the cell inner membrane. This is Protease HtpX homolog from Sinorhizobium medicae (strain WSM419) (Ensifer medicae).